A 414-amino-acid chain; its full sequence is Lysocardiolipin acyltransferase 1 (414 aa).

2 helical membrane passes run 47–67 (FILT…SPFL) and 86–106 (ATWL…KVII). Residues 123-128 (HRTRMD) carry the HXXXXD motif motif. An N6-acetyllysine modification is found at Lys221. 2 consecutive transmembrane segments (helical) span residues 340–360 (LRVL…SPAM) and 362–382 (LLIY…VIFV).

It belongs to the 1-acyl-sn-glycerol-3-phosphate acyltransferase family. Expressed at higher level in heart, kidney and pancreas than in brain, spleen, liver, lung, small intestine and placenta.

The protein localises to the endoplasmic reticulum membrane. The enzyme catalyses a 1-acyl-sn-glycero-3-phosphate + an acyl-CoA = a 1,2-diacyl-sn-glycero-3-phosphate + CoA. It carries out the reaction a 1-acyl-sn-glycero-3-phospho-(1D-myo-inositol) + an acyl-CoA = a 1,2-diacyl-sn-glycero-3-phospho-(1D-myo-inositol) + CoA. It catalyses the reaction 1-acyl-sn-glycero-3-phospho-(1'-sn-glycerol) + an acyl-CoA = a 1,2-diacyl-sn-glycero-3-phospho-(1'-sn-glycerol) + CoA. The catalysed reaction is 1-hexadecanoyl-sn-glycero-3-phosphate + (9Z)-octadecenoyl-CoA = 1-hexadecanoyl-2-(9Z-octadecenoyl)-sn-glycero-3-phosphate + CoA. The enzyme catalyses 1-(9Z-octadecenoyl)-sn-glycero-3-phosphate + (9Z)-octadecenoyl-CoA = 1,2-di-(9Z-octadecenoyl)-sn-glycero-3-phosphate + CoA. It carries out the reaction 1-(9Z,12Z)-octadecadienoyl-sn-glycero-3-phosphate + (9Z)-octadecenoyl-CoA = 1-(9Z,12Z)-octadecadienoyl-2-(9Z)-octadecenoyl-sn-glycero-3-phosphate + CoA. It catalyses the reaction 1-(9Z,12Z,15Z)-octadecatrienoyl-sn-glycero-3-phosphate + (9Z)-octadecenoyl-CoA = 1-(9Z,12Z,15Z)-octadecatrienoyl-2-(9Z)-octadecenoyl-sn-glycero-3-phosphate + CoA. The catalysed reaction is 1-(9Z-octadecenoyl)-sn-glycero-3-phosphate + hexadecanoyl-CoA = 1-(9Z)-octadecenoyl-2-hexadecanoyl-sn-glycero-3-phosphate + CoA. The enzyme catalyses 1-(9Z-octadecenoyl)-sn-glycero-3-phosphate + octadecanoyl-CoA = 1-(9Z-octadecenoyl)-2-octadecanoyl-sn-glycero-3-phosphate + CoA. It carries out the reaction 1-acyl-sn-glycero-3-phospho-(1'-sn-glycerol) + (9Z)-octadecenoyl-CoA = 1-acyl-2-(9Z-octadecenoyl)-sn-glycero-3-phospho-(1'-sn-glycerol) + CoA. It catalyses the reaction a 1-acyl-sn-glycero-3-phospho-(1D-myo-inositol) + (9Z)-octadecenoyl-CoA = a 1-acyl-2-(9Z-octadecenoyl)-sn-glycero-3-phospho-(1D-myo-inositol) + CoA. The catalysed reaction is 1-hexadecanoyl-sn-glycero-3-phospho-(1D-myo-inositol) + hexadecanoyl-CoA = 1,2-dihexadecanoyl-sn-glycero-3-phospho-(1D-myo-inositol) + CoA. The enzyme catalyses 1-hexadecanoyl-sn-glycero-3-phospho-(1D-myo-inositol) + octadecanoyl-CoA = 1-hexadecanoyl-2-octadecanoyl-sn-glycero-3-phospho-(1D-myo-inositol) + CoA. It carries out the reaction 1-hexadecanoyl-sn-glycero-3-phospho-(1D-myo-inositol) + (9Z)-octadecenoyl-CoA = 1-hexadecanoyl-2-(9Z-octadecenoyl)-sn-glycero-3-phospho-(1D-myo-inositol) + CoA. It catalyses the reaction 1-hexadecanoyl-sn-glycero-3-phospho-(1D-myo-inositol) + (9Z,12Z)-octadecadienoyl-CoA = 1-hexadecanoyl-2-(9Z,12Z-octadecadienoyl)-sn-glycero-3-phospho-(1D-myo-inositol) + CoA. The catalysed reaction is 1-hexadecanoyl-sn-glycero-3-phospho-(1D-myo-inositol) + (5Z,8Z,11Z,14Z)-eicosatetraenoyl-CoA = 1-hexadecanoyl-2-(5Z,8Z,11Z,14Z-eicosatetraenoyl)-sn-glycero-3-phospho-D-myo-inositol + CoA. The enzyme catalyses 1-hexadecanoyl-sn-glycero-3-phospho-(1'-sn-glycerol) + hexadecanoyl-CoA = 1,2-dihexadecanoyl-sn-glycero-3-phospho-(1'-sn-glycerol) + CoA. It carries out the reaction 1-hexadecanoyl-sn-glycero-3-phospho-(1'-sn-glycerol) + octadecanoyl-CoA = 1-hexadecanoyl-2-octadecanoyl-sn-glycero-3-phospho-(1'-sn-glycerol) + CoA. It catalyses the reaction 1-hexadecanoyl-sn-glycero-3-phospho-(1'-sn-glycerol) + (9Z)-octadecenoyl-CoA = 1-hexadecanoyl-2-(9Z-octadecenoyl)-sn-glycero-3-phospho-(1'-sn-glycerol) + CoA. The catalysed reaction is 1-hexadecanoyl-sn-glycero-3-phospho-(1'-sn-glycerol) + (9Z,12Z)-octadecadienoyl-CoA = 1-hexadecanoyl-2-(9Z,12Z-octadecadienoyl)-sn-glycero-3-phospho-(1'-sn-glycerol) + CoA. The enzyme catalyses 1-tetradecanoyl-sn-glycero-3-phospho-(1'-sn-glycerol) + (9Z)-octadecenoyl-CoA = 1-tetradecanoyl-2-(9Z-octadecenoyl)-sn-glycero-3-phospho-(1'-sn-glycerol) + CoA. It carries out the reaction 1-octadecanoyl-sn-glycero-3-phospho-(1'-sn-glycerol) + (9Z)-octadecenoyl-CoA = 1-octadecanoyl-2-(9Z-octadecenoyl)-sn-glycero-3-phospho-(1'-sn-glycerol) + CoA. It catalyses the reaction 1-(9Z-octadecenoyl)-sn-glycero-3-phospho-(1'-sn-glycerol) + (9Z)-octadecenoyl-CoA = 1,2-di-(9Z-octadecenoyl)-sn-glycero-3-phospho-(1'-sn-glycerol) + CoA. The catalysed reaction is 1-hexadecanoyl-sn-glycero-3-phospho-(1D-myo-inositol) + dodecanoyl-CoA = 1-hexadecanoyl-2-dodecanoyl-sn-glycero-3-phospho-(1D-myo-inositol) + CoA. The enzyme catalyses 1',3'-bis-[1-acyl-sn-glycero-3-phospho]-glycerol + (9Z)-octadecenoyl-CoA = 1'-[1-acyl-2-(9Z)-octadecenoyl-sn-glycero-3-phospho],3'-[1-acyl,2-hydroxy-sn-glycero-3-phospho]-glycerol + CoA. It carries out the reaction 1'-[1,2-diacyl-sn-glycero-3-phospho],3'-[1-acyl-sn-glycero-3-phospho]-glycerol + (9Z)-octadecenoyl-CoA = 1'-[1,2-diacyl-sn-glycero-3-phospho],3'-[1-acyl,2-(9Z)-octadecenoyl-sn-glycero-3-phospho]-glycerol + CoA. It catalyses the reaction 1'-[1,2-diacyl-sn-glycero-3-phospho],3'-[1-acyl-sn-glycero-3-phospho]-glycerol + (9Z,12Z)-octadecadienoyl-CoA = 1'-[1,2-diacyl-sn-glycero-3-phospho],3'-[1-acyl,2-(9Z,12Z)-octadecadienoyl-sn-glycero-3-phospho]-glycerol + CoA. The catalysed reaction is 1'-[1,2-diacyl-sn-glycero-3-phospho],3'-[1-acyl-sn-glycero-3-phospho]-glycerol + dodecanoyl-CoA = 1'-[1,2-diacyl-sn-glycero-3-phospho],3'-[1-acyl,2-dodecanoyl-sn-glycero-3-phospho]-glycerol + CoA. The enzyme catalyses 1',3'-bis-[1-acyl-sn-glycero-3-phospho]-glycerol + dodecanoyl-CoA = 1'-[1-acyl-2-dodecanoyl-sn-glycero-3-phospho],3'-[1-acyl,2-hydroxy-sn-glycero-3-phospho]-glycerol + CoA. It carries out the reaction a 1-acyl-sn-glycero-3-phosphate + (9Z)-octadecenoyl-CoA = a 1-acyl-2-(9Z-octadecenoyl)-sn-glycero-3-phosphate + CoA. It catalyses the reaction 1',3'-bis-[1-acyl-sn-glycero-3-phospho]-glycerol + (9Z,12Z)-octadecadienoyl-CoA = 1'-[1-acyl-2-(9Z,12Z)-octadecadienoyl-sn-glycero-3-phospho],3'-[1-acyl,2-hydroxy-sn-glycero-3-phospho]-glycerol + CoA. The catalysed reaction is 1',3'-bis-[1-acyl-sn-glycero-3-phospho]-glycerol + hexadecanoyl-CoA = 1'-[1-acyl-2-hexadecanoyl-sn-glycero-3-phospho],3'-[1-acyl,2-hydroxy-sn-glycero-3-phospho]-glycerol + CoA. The enzyme catalyses 1',3'-bis-[1-acyl-sn-glycero-3-phospho]-glycerol + octadecanoyl-CoA = 1'-[1-acyl-2-octadecanoyl-sn-glycero-3-phospho],3'-[1-acyl,2-hydroxy-sn-glycero-3-phospho]-glycerol + CoA. It carries out the reaction 1'-[1,2-diacyl-sn-glycero-3-phospho],3'-[1-acyl-sn-glycero-3-phospho]-glycerol + octanoyl-CoA = 1'-[1,2-diacyl-sn-glycero-3-phospho],3'-[1-acyl,2-octanoyl-sn-glycero-3-phospho]-glycerol + CoA. It catalyses the reaction 1',3'-bis-[1-acyl-sn-glycero-3-phospho]-glycerol + octanoyl-CoA = 1'-[1-acyl-2-octanoyl-sn-glycero-3-phospho],3'-[1-acyl,2-hydroxy-sn-glycero-3-phospho]-glycerol + CoA. The catalysed reaction is 1'-[1,2-diacyl-sn-glycero-3-phospho],3'-[1-acyl-sn-glycero-3-phospho]-glycerol + hexadecanoyl-CoA = 1'-[1,2-diacyl-sn-glycero-3-phospho],3'-[1-acyl,2-hexadecanoyl-sn-glycero-3-phospho]-glycerol + CoA. The enzyme catalyses 1'-[1,2-diacyl-sn-glycero-3-phospho],3'-[1-acyl-sn-glycero-3-phospho]-glycerol + (5Z,8Z,11Z,14Z)-eicosatetraenoyl-CoA = 1'-[1,2-diacyl-sn-glycero-3-phospho],3'-[1-acyl,2-(5Z,8Z,11Z,14Z)-eicosatetraenoyl-sn-glycero-3-phospho]-glycerol + CoA. It carries out the reaction 1',3'-bis-[1-acyl-sn-glycero-3-phospho]-glycerol + (5Z,8Z,11Z,14Z)-eicosatetraenoyl-CoA = 1'-[1-acyl-2-(5Z,8Z,11Z,14Z)-eicosatetraenoyl-sn-glycero-3-phospho],3'-[1-acyl,2-hydroxy-sn-glycero-3-phospho]-glycerol + CoA. It catalyses the reaction a 1-acyl-sn-glycero-3-phospho-(1D-myo-inositol) + octadecanoyl-CoA = a 1-acyl-2-octadecanoyl-sn-glycero-3-phospho-(1D-myo-inositol) + CoA. The catalysed reaction is a 2-acyl-sn-glycero-3-phospho-D-myo-inositol + octadecanoyl-CoA = 1-octadecanoyl-2-acyl-sn-glycero-3-phospho-1D-myo-inositol + CoA. It participates in phospholipid metabolism; CDP-diacylglycerol biosynthesis; CDP-diacylglycerol from sn-glycerol 3-phosphate: step 2/3. Exhibits acyl-CoA:lysocardiolipin acyltransferase (ALCAT) activity; catalyzes the reacylation of lyso-cardiolipin to cardiolipin (CL), a key step in CL remodeling. Recognizes both monolysocardiolipin and dilysocardiolipin as substrates with a preference for linoleoyl-CoA and oleoyl-CoA as acyl donors. Also exhibits 1-acyl-sn-glycerol-3-phosphate acyltransferase activity (AGPAT) activity; converts 1-acyl-sn-glycerol-3- phosphate (lysophosphatidic acid or LPA) into 1,2-diacyl-sn-glycerol-3- phosphate (phosphatidic acid or PA) by incorporating an acyl moiety at the sn-2 position of the glycerol backbone. Possesses both lysophosphatidylinositol acyltransferase (LPIAT) and lysophosphatidylglycerol acyltransferase (LPGAT) activities. Required for establishment of the hematopoietic and endothelial lineages. The chain is Lysocardiolipin acyltransferase 1 (LCLAT1) from Homo sapiens (Human).